We begin with the raw amino-acid sequence, 783 residues long: BMP/retinoic acid-inducible neural-specific protein 2 (783 aa).

The first 33 residues, 1-33 (MRWPCSSRFRGLWPEAAPWAVLLALGVPGWVLA), serve as a signal peptide directing secretion. An MACPF domain is found at 85–281 (RYRIYREFAR…FVAAALSYIT (197 aa)). Asn185, Asn354, Asn473, Asn579, Asn626, and Asn658 each carry an N-linked (GlcNAc...) asparagine glycan.

This sequence belongs to the BRINP family. As to expression, expressed in olfactory bulb, cerebellum and neuronal layers in hippocampus.

It is found in the secreted. Its function is as follows. Inhibits neuronal cell proliferation by negative regulation of the cell cycle transition. The chain is BMP/retinoic acid-inducible neural-specific protein 2 (Brinp2) from Rattus norvegicus (Rat).